Consider the following 357-residue polypeptide: MAKDYYAILGVDRNASQDDIKKAFRELAKKYHPDANPGNKEAEEKFKEIAEAYEVLSDPQKRKQYDETGTTDFNAGSGFNWQDFTHFDDINDIFNQFFGGNFGDTFFGGYTNQPDLDIYLRVNISLEDAYYGASKNVKYRRNAMCEHCSGTGAENKVLITCPTCHGSGQERITRGQGFFRMVTVTECRTCHGRGKIPQKPCTVCHGTGTVSKNEDISVNIPKGADTNLKLRLKNMGNSYGGVTGDLYIVLIVNNPPGIRRSGQDIYVEHTIDFPEAALGGEEEIKLFRESYNLKIPAGTQPGEILKIKGAGMPRINGHGSGDLNVIIKIEVPKHLTSRQKELLEEFRNEKKKSWFHF.

Residues 4-69 (DYYAILGVDR…QKRKQYDETG (66 aa)) form the J domain. The CR-type zinc finger occupies 132–213 (GASKNVKYRR…CHGTGTVSKN (82 aa)). Zn(2+) contacts are provided by Cys145, Cys148, Cys161, Cys164, Cys187, Cys190, Cys201, and Cys204. 4 CXXCXGXG motif repeats span residues 145 to 152 (CEHCSGTG), 161 to 168 (CPTCHGSG), 187 to 194 (CRTCHGRG), and 201 to 208 (CTVCHGTG).

Belongs to the DnaJ family. Homodimer. Zn(2+) serves as cofactor.

The protein localises to the cytoplasm. Its function is as follows. Participates actively in the response to hyperosmotic and heat shock by preventing the aggregation of stress-denatured proteins and by disaggregating proteins, also in an autonomous, DnaK-independent fashion. Unfolded proteins bind initially to DnaJ; upon interaction with the DnaJ-bound protein, DnaK hydrolyzes its bound ATP, resulting in the formation of a stable complex. GrpE releases ADP from DnaK; ATP binding to DnaK triggers the release of the substrate protein, thus completing the reaction cycle. Several rounds of ATP-dependent interactions between DnaJ, DnaK and GrpE are required for fully efficient folding. Also involved, together with DnaK and GrpE, in the DNA replication of plasmids through activation of initiation proteins. This chain is Chaperone protein DnaJ, found in Picrophilus torridus (strain ATCC 700027 / DSM 9790 / JCM 10055 / NBRC 100828 / KAW 2/3).